We begin with the raw amino-acid sequence, 227 residues long: Cytochrome c oxidase subunit 2 (227 aa).

At 1–26 (MATWSNFNLQNSASPLMEQIIFFHDH) the chain is on the mitochondrial intermembrane side. A helical transmembrane segment spans residues 27–51 (TLVILIMITILVGYLMISLFFNSYI). Residues 52-62 (NRFLLEGQMIE) lie on the Mitochondrial matrix side of the membrane. Residues 63–81 (LIWTILPAITLIFIALPSL) traverse the membrane as a helical segment. Residues 82–227 (RLLYLLDELN…NFINWINNYS (146 aa)) lie on the Mitochondrial intermembrane side of the membrane. Residues His-161, Cys-196, Glu-198, Cys-200, His-204, and Met-207 each coordinate Cu cation. Mg(2+) is bound at residue Glu-198.

The protein belongs to the cytochrome c oxidase subunit 2 family. As to quaternary structure, component of the cytochrome c oxidase (complex IV, CIV), a multisubunit enzyme composed of a catalytic core of 3 subunits and several supernumerary subunits. The complex exists as a monomer or a dimer and forms supercomplexes (SCs) in the inner mitochondrial membrane with ubiquinol-cytochrome c oxidoreductase (cytochrome b-c1 complex, complex III, CIII). Cu cation is required as a cofactor.

The protein localises to the mitochondrion inner membrane. The catalysed reaction is 4 Fe(II)-[cytochrome c] + O2 + 8 H(+)(in) = 4 Fe(III)-[cytochrome c] + 2 H2O + 4 H(+)(out). Functionally, component of the cytochrome c oxidase, the last enzyme in the mitochondrial electron transport chain which drives oxidative phosphorylation. The respiratory chain contains 3 multisubunit complexes succinate dehydrogenase (complex II, CII), ubiquinol-cytochrome c oxidoreductase (cytochrome b-c1 complex, complex III, CIII) and cytochrome c oxidase (complex IV, CIV), that cooperate to transfer electrons derived from NADH and succinate to molecular oxygen, creating an electrochemical gradient over the inner membrane that drives transmembrane transport and the ATP synthase. Cytochrome c oxidase is the component of the respiratory chain that catalyzes the reduction of oxygen to water. Electrons originating from reduced cytochrome c in the intermembrane space (IMS) are transferred via the dinuclear copper A center (CU(A)) of subunit 2 and heme A of subunit 1 to the active site in subunit 1, a binuclear center (BNC) formed by heme A3 and copper B (CU(B)). The BNC reduces molecular oxygen to 2 water molecules using 4 electrons from cytochrome c in the IMS and 4 protons from the mitochondrial matrix. In Choristoneura rosaceana (Oblique banded leafroller), this protein is Cytochrome c oxidase subunit 2 (COII).